Reading from the N-terminus, the 137-residue chain is Peptide methionine sulfoxide reductase MsrB (137 aa).

A disordered region spans residues 1 to 33 (MSNNQDRPGQITDESLRERLSPEAYAVTRRAGT). The MsrB domain occupies 13–135 (DESLRERLSP…NSLSLDFKAA (123 aa)). Residues Cys52, Cys55, Cys101, and Cys104 each contribute to the Zn(2+) site. Catalysis depends on Cys124, which acts as the Nucleophile.

The protein belongs to the MsrB Met sulfoxide reductase family. The cofactor is Zn(2+).

It carries out the reaction L-methionyl-[protein] + [thioredoxin]-disulfide + H2O = L-methionyl-(R)-S-oxide-[protein] + [thioredoxin]-dithiol. The sequence is that of Peptide methionine sulfoxide reductase MsrB from Thioalkalivibrio sulfidiphilus (strain HL-EbGR7).